The chain runs to 214 residues: Large ribosomal subunit protein eL14 (214 aa).

Lys-79 is subject to N6-acetyllysine. Lys-85 is subject to N6-acetyllysine; alternate. Lys-85 is subject to N6-succinyllysine; alternate. A Glycyl lysine isopeptide (Lys-Gly) (interchain with G-Cter in SUMO2) cross-link involves residue Lys-124. Ser-139 carries the post-translational modification Phosphoserine. A disordered region spans residues 161–214; sequence PAKKITTEGKKAPAQKAPAQKAAGQKAAPPPKTQKGQKAPSQKAPAPKASGKKA. The stretch at 170–174 is one 1-1; approximate repeat; it reads KKAPA. The 4 X 5 AA tandem repeats of Q-K-A-[APS]-X stretch occupies residues 170–189; sequence KKAPAQKAPAQKAAGQKAAP. A compositionally biased stretch (low complexity) spans 172–214; the sequence is APAQKAPAQKAAGQKAAPPPKTQKGQKAPSQKAPAPKASGKKA. 5 repeat units span residues 175 to 179, 180 to 184, 185 to 189, 192 to 194, and 195 to 197. Positions 192 to 197 are 2 X 3 AA tandem repeats of K-G-Q; sequence KTQKGQ. The residue at position 203 (Lys-203) is an N6-succinyllysine.

Belongs to the eukaryotic ribosomal protein eL14 family. In terms of assembly, component of the large ribosomal subunit.

The protein localises to the cytoplasm. Component of the large ribosomal subunit. The ribosome is a large ribonucleoprotein complex responsible for the synthesis of proteins in the cell. The chain is Large ribosomal subunit protein eL14 (RPL14) from Bos taurus (Bovine).